The chain runs to 242 residues: Adenylate kinase 1 (242 aa).

ATP contacts are provided by residues 38–43 and Gly-42; that span reads GSGKGT. The segment at 58-87 is NMP; it reads STGDLLREAAEKKTELGLKIKNIINEGKLV. Residues Thr-59, Arg-64, 85 to 87, Gly-113, 113 to 116, and Gln-120 contribute to the AMP site; these read KLV and GYPR. Residues 154-191 are LID; sequence GRLIHKPSGRIYHKIFNPPKVPFRDDVTNEPLIQREDD. Arg-155 and Tyr-165 together coordinate ATP. Position 199 (Arg-199) interacts with AMP. An ATP-binding site is contributed by Ala-229.

The protein belongs to the adenylate kinase family.

Its subcellular location is the cytoplasm. The enzyme catalyses AMP + ATP = 2 ADP. Inhibited by the dinucleoside pentaphosphate compound P1,P5-di(adenosine-5') pentaphosphate (AP5A). Its function is as follows. Catalyzes the reversible transfer of the terminal phosphate group between ATP and AMP. Has very low activity with CTP, GTP, ITP and UTP and no activity with GMP, CMP, UMP or IMP in vitro. This Plasmodium falciparum (isolate 3D7) protein is Adenylate kinase 1.